Consider the following 226-residue polypeptide: Triosephosphate isomerase (226 aa).

13–15 is a binding site for substrate; that stretch reads NFK. The active-site Electrophile is the H97. Residue E145 is the Proton acceptor of the active site. Substrate-binding positions include I150, G185, and 206–207; that span reads AS.

It belongs to the triosephosphate isomerase family. Homotetramer; dimer of dimers.

Its subcellular location is the cytoplasm. The catalysed reaction is D-glyceraldehyde 3-phosphate = dihydroxyacetone phosphate. It participates in carbohydrate biosynthesis; gluconeogenesis. It functions in the pathway carbohydrate degradation; glycolysis; D-glyceraldehyde 3-phosphate from glycerone phosphate: step 1/1. Its function is as follows. Involved in the gluconeogenesis. Catalyzes stereospecifically the conversion of dihydroxyacetone phosphate (DHAP) to D-glyceraldehyde-3-phosphate (G3P). The sequence is that of Triosephosphate isomerase from Methanobacterium bryantii.